We begin with the raw amino-acid sequence, 147 residues long: Myoglobin (147 aa).

The Globin domain occupies 2-141 (ADFDMVLKCW…IIADMEADYK (140 aa)). Residue His60 coordinates nitrite. An O2-binding site is contributed by His60. Heme b is bound at residue His89.

Belongs to the globin family. Monomeric.

The protein resides in the cytoplasm. It is found in the sarcoplasm. It catalyses the reaction Fe(III)-heme b-[protein] + nitric oxide + H2O = Fe(II)-heme b-[protein] + nitrite + 2 H(+). The enzyme catalyses H2O2 + AH2 = A + 2 H2O. Functionally, monomeric heme protein which primary function is to store oxygen and facilitate its diffusion within muscle tissues. Reversibly binds oxygen through a pentacoordinated heme iron and enables its timely and efficient release as needed during periods of heightened demand. Depending on the oxidative conditions of tissues and cells, and in addition to its ability to bind oxygen, it also has a nitrite reductase activity whereby it regulates the production of bioactive nitric oxide. Under stress conditions, like hypoxia and anoxia, it also protects cells against reactive oxygen species thanks to its pseudoperoxidase activity. The chain is Myoglobin (mb) from Notothenia neglecta (Yellowbelly rockcod).